Here is a 452-residue protein sequence, read N- to C-terminus: Coproporphyrinogen III oxidase (452 aa).

FAD-binding positions include 10 to 15, 36 to 37, 58 to 61, valine 242, tryptophan 390, and 426 to 428; these read GGGISG, EP, GAEA, and IGV.

The protein belongs to the protoporphyrinogen/coproporphyrinogen oxidase family. Coproporphyrinogen III oxidase subfamily. The cofactor is FAD.

It localises to the cytoplasm. It carries out the reaction coproporphyrinogen III + 3 O2 = coproporphyrin III + 3 H2O2. The protein operates within porphyrin-containing compound metabolism; protoheme biosynthesis. Functionally, involved in coproporphyrin-dependent heme b biosynthesis. Catalyzes the oxidation of coproporphyrinogen III to coproporphyrin III. The sequence is that of Coproporphyrinogen III oxidase from Mycobacterium bovis (strain ATCC BAA-935 / AF2122/97).